A 273-amino-acid chain; its full sequence is Formamidopyrimidine-DNA glycosylase (273 aa).

The active-site Schiff-base intermediate with DNA is the Pro2. The Proton donor role is filled by Glu3. Lys58 functions as the Proton donor; for beta-elimination activity in the catalytic mechanism. DNA is bound by residues His92, Arg111, and Lys153. The FPG-type zinc-finger motif lies at 238–272 (KVYGREGQSCLSCSSTIIKIKHSGRSTFYCKTCQY). The active-site Proton donor; for delta-elimination activity is Arg262.

This sequence belongs to the FPG family. In terms of assembly, monomer. The cofactor is Zn(2+).

It catalyses the reaction Hydrolysis of DNA containing ring-opened 7-methylguanine residues, releasing 2,6-diamino-4-hydroxy-5-(N-methyl)formamidopyrimidine.. The enzyme catalyses 2'-deoxyribonucleotide-(2'-deoxyribose 5'-phosphate)-2'-deoxyribonucleotide-DNA = a 3'-end 2'-deoxyribonucleotide-(2,3-dehydro-2,3-deoxyribose 5'-phosphate)-DNA + a 5'-end 5'-phospho-2'-deoxyribonucleoside-DNA + H(+). Its function is as follows. Involved in base excision repair of DNA damaged by oxidation or by mutagenic agents. Acts as a DNA glycosylase that recognizes and removes damaged bases. Has a preference for oxidized purines, such as 7,8-dihydro-8-oxoguanine (8-oxoG). Has AP (apurinic/apyrimidinic) lyase activity and introduces nicks in the DNA strand. Cleaves the DNA backbone by beta-delta elimination to generate a single-strand break at the site of the removed base with both 3'- and 5'-phosphates. In Rickettsia conorii (strain ATCC VR-613 / Malish 7), this protein is Formamidopyrimidine-DNA glycosylase.